We begin with the raw amino-acid sequence, 92 residues long: Small ribosomal subunit protein uS19c (92 aa).

This sequence belongs to the universal ribosomal protein uS19 family.

It is found in the plastid. The protein localises to the chloroplast. Protein S19 forms a complex with S13 that binds strongly to the 16S ribosomal RNA. This Guizotia abyssinica (Niger) protein is Small ribosomal subunit protein uS19c.